The chain runs to 133 residues: Holo-[acyl-carrier-protein] synthase (133 aa).

Mg(2+) is bound by residues D8 and E57.

The protein belongs to the P-Pant transferase superfamily. AcpS family. It depends on Mg(2+) as a cofactor.

It is found in the cytoplasm. The enzyme catalyses apo-[ACP] + CoA = holo-[ACP] + adenosine 3',5'-bisphosphate + H(+). Its function is as follows. Transfers the 4'-phosphopantetheine moiety from coenzyme A to a Ser of acyl-carrier-protein. In Caulobacter vibrioides (strain ATCC 19089 / CIP 103742 / CB 15) (Caulobacter crescentus), this protein is Holo-[acyl-carrier-protein] synthase.